A 420-amino-acid polypeptide reads, in one-letter code: UDP-N-acetylglucosamine 1-carboxyvinyltransferase (420 aa).

22–23 contributes to the phosphoenolpyruvate binding site; the sequence is KN. R93 lines the UDP-N-acetyl-alpha-D-glucosamine pocket. The Proton donor role is filled by C117. At C117 the chain carries 2-(S-cysteinyl)pyruvic acid O-phosphothioketal. The UDP-N-acetyl-alpha-D-glucosamine site is built by D307 and I329.

Belongs to the EPSP synthase family. MurA subfamily.

It is found in the cytoplasm. The catalysed reaction is phosphoenolpyruvate + UDP-N-acetyl-alpha-D-glucosamine = UDP-N-acetyl-3-O-(1-carboxyvinyl)-alpha-D-glucosamine + phosphate. The protein operates within cell wall biogenesis; peptidoglycan biosynthesis. Its function is as follows. Cell wall formation. Adds enolpyruvyl to UDP-N-acetylglucosamine. The polypeptide is UDP-N-acetylglucosamine 1-carboxyvinyltransferase (Saccharophagus degradans (strain 2-40 / ATCC 43961 / DSM 17024)).